Here is a 106-residue protein sequence, read N- to C-terminus: MIVTTTNCIEGKKVLEYKGIVFGEVISGVDAIKDIAAGFTNFFGGRSKSYEGELIQAREEALEELKNRAYAVGANAVIGIDIDYEVLGQGGNMLMVTASGTAVVVE.

This sequence belongs to the UPF0145 family.

In Clostridium kluyveri (strain ATCC 8527 / DSM 555 / NBRC 12016 / NCIMB 10680 / K1), this protein is UPF0145 protein CKL_2433.